Reading from the N-terminus, the 220-residue chain is Redox-sensing transcriptional repressor Rex (220 aa).

Residues 17-56 (LYARSLRYLLQEGVESVSSQELGDRINVTAAQIRKDLSYF) constitute a DNA-binding region (H-T-H motif). 91-96 (GIGHLG) lines the NAD(+) pocket.

Belongs to the transcriptional regulatory Rex family. As to quaternary structure, homodimer.

It is found in the cytoplasm. Modulates transcription in response to changes in cellular NADH/NAD(+) redox state. The protein is Redox-sensing transcriptional repressor Rex of Roseiflexus sp. (strain RS-1).